We begin with the raw amino-acid sequence, 205 residues long: Ras-related protein Rab-1A (205 aa).

Residues 18 to 26, 36 to 43, 66 to 70, 124 to 127, and 154 to 156 contribute to the GTP site; these read GDSGVGKSC, YTESYIST, DTAGQ, NKSD, and SAK. Positions 40-48 match the Effector region motif; sequence YISTIGVDF. The segment covering 183–198 has biased composition (polar residues); sequence SDSKPSVKINSSTPVS. A disordered region spans residues 183 to 205; it reads SDSKPSVKINSSTPVSANKGGCC. 2 S-geranylgeranyl cysteine lipidation sites follow: cysteine 204 and cysteine 205.

It belongs to the small GTPase superfamily. Rab family.

The protein localises to the golgi apparatus. It is found in the endoplasmic reticulum. In terms of biological role, probably required for transit of protein from the ER through Golgi compartment. This chain is Ras-related protein Rab-1A (RAB1A), found in Lymnaea stagnalis (Great pond snail).